Reading from the N-terminus, the 312-residue chain is Olfactory receptor 2M3 (312 aa).

The Extracellular segment spans residues 1-25 (MARENSTFNSDFILLGIFNHSPTHT). An N-linked (GlcNAc...) asparagine glycan is attached at N5. The helical transmembrane segment at 26–49 (FLFFLVLAIFSVAFMGNSVMVLLI) threads the bilayer. Topologically, residues 50 to 57 (YLDTQLHT) are cytoplasmic. The helical transmembrane segment at 58-79 (PMYLLLSQLSLMDLMLICTTVP) threads the bilayer. Topologically, residues 80–100 (KMAFNYLSGSKSISMAGCATQ) are extracellular. A disulfide bond links C97 and C189. The chain crosses the membrane as a helical span at residues 101 to 120 (IFFYTSLLGSECFLLAVMAY). The Cytoplasmic segment spans residues 121-139 (DRYTAICHPLRYTNLMSPK). A helical membrane pass occupies residues 140-158 (ICGLMTAFSWILGSTDGII). The Extracellular segment spans residues 159 to 195 (DVVATFSFSYCGSREIAHFFCDFPSLLILSCSDTSIF). A helical transmembrane segment spans residues 196-219 (EKILFICCIVMIVFPVAIIIASYA). The Cytoplasmic portion of the chain corresponds to 220-236 (RVILAVIHMGSGEGRRK). Residues 237-259 (AFTTCSSHLLVVGMYYGAALFMY) traverse the membrane as a helical segment. Residues 260–272 (IRPTSDRSPTQDK) are Extracellular-facing. A helical transmembrane segment spans residues 273–292 (MVSVFYTILTPMLNPLIYSL). The Cytoplasmic portion of the chain corresponds to 293 to 312 (RNKEVTRAFMKILGKGKSGE).

Belongs to the G-protein coupled receptor 1 family.

The protein resides in the cell membrane. Odorant receptor. The polypeptide is Olfactory receptor 2M3 (OR2M3) (Homo sapiens (Human)).